The primary structure comprises 237 residues: Uridylate kinase (237 aa).

12–15 contributes to the ATP binding site; the sequence is KLSG. The interval 20 to 25 is involved in allosteric activation by GTP; it reads GEDGLG. Glycine 54 serves as a coordination point for UMP. The ATP site is built by glycine 55 and arginine 59. Residues aspartate 74 and 135 to 142 each bind UMP; that span reads TGNPFFTT. Residues threonine 162, tyrosine 168, and aspartate 171 each contribute to the ATP site.

Belongs to the UMP kinase family. Homohexamer.

It is found in the cytoplasm. It carries out the reaction UMP + ATP = UDP + ADP. It participates in pyrimidine metabolism; CTP biosynthesis via de novo pathway; UDP from UMP (UMPK route): step 1/1. With respect to regulation, allosterically activated by GTP. Inhibited by UTP. Catalyzes the reversible phosphorylation of UMP to UDP. This chain is Uridylate kinase, found in Haemophilus influenzae (strain 86-028NP).